The sequence spans 547 residues: Cytochrome P450 monooxygenase cpsD (547 aa).

Residues 18-38 (LTGAALVVTLITSVIIVAADL) traverse the membrane as a helical segment. Cys476 is a binding site for heme. The interval 528-547 (RRRDARRTHEALGSKLKPEE) is disordered. Basic and acidic residues predominate over residues 534 to 547 (RTHEALGSKLKPEE).

It belongs to the cytochrome P450 family. It depends on heme as a cofactor.

It is found in the membrane. The enzyme catalyses campesine B + campesine C + reduced [NADPH--hemoprotein reductase] + O2 = campesine D + oxidized [NADPH--hemoprotein reductase] + 2 H2O + 2 H(+). The catalysed reaction is 2 campesine B + reduced [NADPH--hemoprotein reductase] + O2 = campesine F + oxidized [NADPH--hemoprotein reductase] + 2 H2O + H(+). It carries out the reaction campesine C + campesine A + reduced [NADPH--hemoprotein reductase] + O2 = campesine E + oxidized [NADPH--hemoprotein reductase] + 2 H2O + 2 H(+). It functions in the pathway alkaloid biosynthesis. In terms of biological role, cytochrome P450 monooxygenase; part of the gene cluster that mediates the biosynthesis of campesine G, a dimeric indole piperazine alkaloid that shows good insecticidal activity Galleria mellonella. Within the pathway, cpsD acts as a dimerase that simultaneously catalyzes one C-C bond (C3-C3') and two C-N bonds (C2-N16' and C2'-N16) coupling reactions between campesines B and C to produce a heterodimer with unexpected 6/5/6/6/6/6/5/6 eight-ring scaffold called campesine D. CpsD is also able to catalyze oxidative heterocoupling od campesines A with B to produce campesine F and campesines A with C to produce campesine E. The non-canonical non-ribosomal peptide synthetase cpsA catalyzes the first steps of the pathway by producing L-tryptophanal and L-valinal from their respective amino-acids. These products condensate spontaneously to form trypyl-valyl pyrazine also known as didehydrocampesine A. The NmrA-like family domain-containing oxidoreductase cpsB is the next enzyme in cps pathway and reduces the unstable didehydrocampesine A to campesine A. The methyltransferase cpsF and the acetyltransferase cpsE both recognize N13 of piperazine ring to carry out methylation and acetylation of campesine A to produce campesine C and B, respectively. The cytochrome P450 monooxygenase cpsD then acts as a dimerase that catalyzes oxidative heterocoupling between campesine B and C to produce heterodimers with unexpected 6/5/6/6/6/6/5/6 eight-ring scaffold called campesine D. Finally,the cytochrome P450 monooxygenase cpsC is a regioselective dehydrogenase that catalyzes dehydrogenation reaction towards C2-N1 to produce campesine G. This Aspergillus campestris (strain IBT 28561) protein is Cytochrome P450 monooxygenase cpsD.